A 435-amino-acid polypeptide reads, in one-letter code: Protein deadpan (435 aa).

Low complexity predominate over residues 18-27 (GYSDSYGSNG). The interval 18 to 48 (GYSDSYGSNGRMSNPNGLSKAELRKTNKPIM) is disordered. One can recognise a bHLH domain in the interval 40–97 (LRKTNKPIMEKRRRARINHCLNELKSLILEAMKKDPARHTKLEKADILEMTVKHLQSV). One can recognise an Orange domain in the interval 116 to 149 (FKTGFVECAEEVNRYVSQMDGIDTGVRQRLSAHL). 2 disordered regions span residues 305–334 (QLPV…AASP) and 349–416 (STPP…DEPS). Over residues 311–324 (STSPPLSPISSISS) the composition is skewed to low complexity. Polar residues-rich tracts occupy residues 355–378 (SAET…SSGC) and 385–395 (LQQQQVSSTSG). Phosphoserine is present on residues Ser-407, Ser-408, and Ser-411. A WRPW motif motif is present at residues 432–435 (WRPW).

In terms of assembly, homodimer. Heterodimer with E(spl)mgamma-HLH and E(spl). Transcription repression requires formation of a complex with the corepressor protein Groucho. Interacts (via bHLH motif) with sisA. Interacts with da.

It localises to the nucleus. Its function is as follows. Transcriptional repressor of genes that require a bHLH protein for their transcription. In the larval brain, required to maintain the self-renewal and identity of type II neuroblasts by regulating the expression of the transcriptional repressor erm together with other self-renewal transcriptional repressors such as klu and E(spl)mgamma-HLH. As part of its role in neuroblasts development, has been shown to be a direct target of the Notch signaling pathway, however might work also independently of N/Notch. In the developing larval and pupal brain, required for mushroom body differentiation. Involved in sex determination and SXL transcription repression when in complex with the corepressor protein Groucho. The polypeptide is Protein deadpan (dpn) (Drosophila melanogaster (Fruit fly)).